The sequence spans 74 residues: Psi-conotoxin PrIIIE (74 aa).

Positions 1–19 are cleaved as a signal peptide; sequence MSKLGVLLTICLLLFPITA. Residues 20-50 constitute a propeptide that is removed on maturation; sequence LPVDGDQPADRPVERMQDNISSEQHPFFEKR. 3 disulfide bridges follow: Cys-54–Cys-66, Cys-55–Cys-71, and Cys-61–Cys-72. Cys-72 is subject to Cysteine amide.

The protein belongs to the conotoxin M superfamily. As to expression, expressed by the venom duct.

It is found in the secreted. In terms of biological role, psi-conotoxins act on postsynaptic membranes, and act as non-competitive antagonist of nicotinic acetylcholine receptors (nAChR). Reversibly inhibits both adult- and fetal-types nAChR. The inhibition potency against the adult- (alpha-1/beta-1/epsilon/delta) is higher than against the fetal-type (alpha-1/beta-1/gamma/delta). Induces flaccid paralysis in goldfish, but does not induce any remarkable behavior in mice and does not block action potential in directly stimulated frog muscle preparations. This chain is Psi-conotoxin PrIIIE, found in Conus parius (Cone snail).